Here is a 113-residue protein sequence, read N- to C-terminus: Large ribosomal subunit protein uL22 (113 aa).

This sequence belongs to the universal ribosomal protein uL22 family. Part of the 50S ribosomal subunit.

Functionally, this protein binds specifically to 23S rRNA; its binding is stimulated by other ribosomal proteins, e.g. L4, L17, and L20. It is important during the early stages of 50S assembly. It makes multiple contacts with different domains of the 23S rRNA in the assembled 50S subunit and ribosome. The globular domain of the protein is located near the polypeptide exit tunnel on the outside of the subunit, while an extended beta-hairpin is found that lines the wall of the exit tunnel in the center of the 70S ribosome. This is Large ribosomal subunit protein uL22 from Roseiflexus castenholzii (strain DSM 13941 / HLO8).